A 509-amino-acid polypeptide reads, in one-letter code: 2,3-bisphosphoglycerate-independent phosphoglycerate mutase (509 aa).

D12 and S62 together coordinate Mn(2+). Catalysis depends on S62, which acts as the Phosphoserine intermediate. Residues H123, 153-154 (RD), R185, R191, 260-263 (RPDR), and K333 contribute to the substrate site. Mn(2+) contacts are provided by D400, H404, D441, H442, and H460.

This sequence belongs to the BPG-independent phosphoglycerate mutase family. In terms of assembly, monomer. The cofactor is Mn(2+).

It catalyses the reaction (2R)-2-phosphoglycerate = (2R)-3-phosphoglycerate. The protein operates within carbohydrate degradation; glycolysis; pyruvate from D-glyceraldehyde 3-phosphate: step 3/5. Its function is as follows. Catalyzes the interconversion of 2-phosphoglycerate and 3-phosphoglycerate. This is 2,3-bisphosphoglycerate-independent phosphoglycerate mutase from Clostridium botulinum (strain Langeland / NCTC 10281 / Type F).